The primary structure comprises 353 residues: Photosystem II protein D1 (353 aa).

The residue at position 2 (Thr2) is an N-acetylthreonine. Thr2 is modified (phosphothreonine). The next 3 helical transmembrane spans lie at Tyr29–Ser46, His118–Leu133, and Trp142–Ala156. His118 serves as a coordination point for chlorophyll a. Pheophytin a is bound at residue Tyr126. [CaMn4O5] cluster is bound by residues Asp170 and Glu189. A helical membrane pass occupies residues Phe197–Leu218. His198 is a binding site for chlorophyll a. Residues His215 and Ser264–Phe265 each bind a quinone. His215 lines the Fe cation pocket. His272 provides a ligand contact to Fe cation. The helical transmembrane segment at Phe274–Leu288 threads the bilayer. [CaMn4O5] cluster contacts are provided by His332, Glu333, Asp342, and Ala344. The propeptide occupies Ala345–Gly353.

This sequence belongs to the reaction center PufL/M/PsbA/D family. As to quaternary structure, PSII is composed of 1 copy each of membrane proteins PsbA, PsbB, PsbC, PsbD, PsbE, PsbF, PsbH, PsbI, PsbJ, PsbK, PsbL, PsbM, PsbT, PsbX, PsbY, PsbZ, Psb30/Ycf12, at least 3 peripheral proteins of the oxygen-evolving complex and a large number of cofactors. It forms dimeric complexes. The D1/D2 heterodimer binds P680, chlorophylls that are the primary electron donor of PSII, and subsequent electron acceptors. It shares a non-heme iron and each subunit binds pheophytin, quinone, additional chlorophylls, carotenoids and lipids. D1 provides most of the ligands for the Mn4-Ca-O5 cluster of the oxygen-evolving complex (OEC). There is also a Cl(-1) ion associated with D1 and D2, which is required for oxygen evolution. The PSII complex binds additional chlorophylls, carotenoids and specific lipids. is required as a cofactor. In terms of processing, tyr-161 forms a radical intermediate that is referred to as redox-active TyrZ, YZ or Y-Z. Post-translationally, C-terminally processed by CTPA; processing is essential to allow assembly of the oxygen-evolving complex and thus photosynthetic growth.

It is found in the plastid. The protein localises to the chloroplast thylakoid membrane. The catalysed reaction is 2 a plastoquinone + 4 hnu + 2 H2O = 2 a plastoquinol + O2. Functionally, photosystem II (PSII) is a light-driven water:plastoquinone oxidoreductase that uses light energy to abstract electrons from H(2)O, generating O(2) and a proton gradient subsequently used for ATP formation. It consists of a core antenna complex that captures photons, and an electron transfer chain that converts photonic excitation into a charge separation. The D1/D2 (PsbA/PsbD) reaction center heterodimer binds P680, the primary electron donor of PSII as well as several subsequent electron acceptors. This is Photosystem II protein D1 from Citrus sinensis (Sweet orange).